The following is a 474-amino-acid chain: Probable CAAX prenyl protease 1 (474 aa).

3 consecutive transmembrane segments (helical) span residues S103 to Y123, I196 to V216, and F230 to P250. H332 is a binding site for Zn(2+). E333 is a catalytic residue. H336 serves as a coordination point for Zn(2+). Helical transmembrane passes span I344–I364 and V381–F401. E411 contacts Zn(2+). D415 functions as the Proton donor in the catalytic mechanism.

The protein belongs to the peptidase M48A family. It depends on Zn(2+) as a cofactor.

It localises to the endoplasmic reticulum membrane. The enzyme catalyses Hydrolyzes the peptide bond -P2-(S-farnesyl or geranylgeranyl)C-P1'-P2'-P3'-COOH where P1' and P2' are amino acids with aliphatic side chains and P3' is any C-terminal residue.. In terms of biological role, proteolytically removes the C-terminal three residues of farnesylated proteins. The chain is Probable CAAX prenyl protease 1 from Schizosaccharomyces pombe (strain 972 / ATCC 24843) (Fission yeast).